Here is a 321-residue protein sequence, read N- to C-terminus: Anthranilate phosphoribosyltransferase (321 aa).

Residues Gly-72, 75–76 (GD), Thr-80, 82–85 (NVST), 99–107 (KHGNVSITS), and Ser-111 each bind 5-phospho-alpha-D-ribose 1-diphosphate. Position 72 (Gly-72) interacts with anthranilate. Residue Ser-84 participates in Mg(2+) binding. Asn-102 lines the anthranilate pocket. An anthranilate-binding site is contributed by Arg-157. Residues Asp-216 and Glu-217 each contribute to the Mg(2+) site.

This sequence belongs to the anthranilate phosphoribosyltransferase family. Homodimer. Mg(2+) serves as cofactor.

It catalyses the reaction N-(5-phospho-beta-D-ribosyl)anthranilate + diphosphate = 5-phospho-alpha-D-ribose 1-diphosphate + anthranilate. The protein operates within amino-acid biosynthesis; L-tryptophan biosynthesis; L-tryptophan from chorismate: step 2/5. Catalyzes the transfer of the phosphoribosyl group of 5-phosphorylribose-1-pyrophosphate (PRPP) to anthranilate to yield N-(5'-phosphoribosyl)-anthranilate (PRA). This chain is Anthranilate phosphoribosyltransferase, found in Methanococcus maripaludis (strain DSM 14266 / JCM 13030 / NBRC 101832 / S2 / LL).